A 511-amino-acid polypeptide reads, in one-letter code: Chromosomal replication initiator protein DnaA (511 aa).

Residues 1 to 87 form a domain I, interacts with DnaA modulators region; it reads MSVELWQQCV…IGSKRSSAPR (87 aa). The tract at residues 87–174 is domain II; that stretch reads RAAPNAPLAA…QVEGALKHTS (88 aa). Residues 133–160 are disordered; sequence VATHDEPSRDSFDPMAGASSQQAPARAE. Basic and acidic residues predominate over residues 134–144; that stretch reads ATHDEPSRDSF. The segment at 175–391 is domain III, AAA+ region; it reads YLNRTFTFEN…GALKRVIAHS (217 aa). ATP contacts are provided by glycine 219, glycine 221, lysine 222, and threonine 223. A domain IV, binds dsDNA region spans residues 392–511; that stretch reads HFMGRDITIE…YKNLLRTLTT (120 aa).

Belongs to the DnaA family. In terms of assembly, oligomerizes as a right-handed, spiral filament on DNA at oriC.

Its subcellular location is the cytoplasm. Plays an essential role in the initiation and regulation of chromosomal replication. ATP-DnaA binds to the origin of replication (oriC) to initiate formation of the DNA replication initiation complex once per cell cycle. Binds the DnaA box (a 9 base pair repeat at the origin) and separates the double-stranded (ds)DNA. Forms a right-handed helical filament on oriC DNA; dsDNA binds to the exterior of the filament while single-stranded (ss)DNA is stabiized in the filament's interior. The ATP-DnaA-oriC complex binds and stabilizes one strand of the AT-rich DNA unwinding element (DUE), permitting loading of DNA polymerase. After initiation quickly degrades to an ADP-DnaA complex that is not apt for DNA replication. Binds acidic phospholipids. The polypeptide is Chromosomal replication initiator protein DnaA (Pseudomonas syringae pv. tomato (strain ATCC BAA-871 / DC3000)).